The following is an 870-amino-acid chain: UvrABC system protein B (870 aa).

The region spanning 20-410 (EGVDNNDRTQ…VFAEQVIRPT (391 aa)) is the Helicase ATP-binding domain. 33 to 40 (GVTGSGKT) contributes to the ATP binding site. The Beta-hairpin motif lies at 86–109 (YYDYYQPEAYVPRTDTFIEKESSI). Residues 425-591 (QVDDVVGEIR…SVKSRISDIL (167 aa)) enclose the Helicase C-terminal domain. A UVR domain is found at 620–655 (KAHLDAMEKQMRDAAANLDFEKAARIRDEIKRLREM). 2 disordered regions span residues 671 to 698 (ESPV…QERF) and 741 to 870 (AKPS…RPGK). Over residues 679-689 (KGKHNKGVAKH) the composition is skewed to basic residues. 2 stretches are compositionally biased toward basic and acidic residues: residues 793–808 (NSLD…KPVE) and 827–836 (TDVKDRDDSA). Basic residues predominate over residues 858–870 (EKRRPGKTGRPGK).

Belongs to the UvrB family. Forms a heterotetramer with UvrA during the search for lesions. Interacts with UvrC in an incision complex.

It is found in the cytoplasm. The UvrABC repair system catalyzes the recognition and processing of DNA lesions. A damage recognition complex composed of 2 UvrA and 2 UvrB subunits scans DNA for abnormalities. Upon binding of the UvrA(2)B(2) complex to a putative damaged site, the DNA wraps around one UvrB monomer. DNA wrap is dependent on ATP binding by UvrB and probably causes local melting of the DNA helix, facilitating insertion of UvrB beta-hairpin between the DNA strands. Then UvrB probes one DNA strand for the presence of a lesion. If a lesion is found the UvrA subunits dissociate and the UvrB-DNA preincision complex is formed. This complex is subsequently bound by UvrC and the second UvrB is released. If no lesion is found, the DNA wraps around the other UvrB subunit that will check the other stand for damage. This chain is UvrABC system protein B, found in Mesorhizobium japonicum (strain LMG 29417 / CECT 9101 / MAFF 303099) (Mesorhizobium loti (strain MAFF 303099)).